An 860-amino-acid polypeptide reads, in one-letter code: Elastin (860 aa).

Residues 1–27 (MAGLTAVVPQPGVLLILLLNLLHPAQP) form the signal peptide. A 4-hydroxyproline mark is found at proline 35 and proline 72. A Hydroxyproline modification is found at proline 84. Proline 105 is subject to 4-hydroxyproline. Allysine occurs at positions 123 and 127. Residues proline 217, proline 230, proline 233, and proline 253 each carry the 4-hydroxyproline modification. Allysine is present on residues lysine 299, lysine 318, and lysine 321. Proline 346 bears the 4-hydroxyproline mark. An allysine mark is found at lysine 368 and lysine 371. Residue proline 383 is modified to Hydroxyproline. 2 positions are modified to 4-hydroxyproline: proline 399 and proline 405. A hydroxyproline mark is found at proline 410 and proline 415. An allysine mark is found at lysine 431, lysine 435, lysine 438, lysine 481, and lysine 484. A 4-hydroxyproline mark is found at proline 498 and proline 519. Allysine occurs at positions 534, 595, 599, and 603. A 4-hydroxyproline mark is found at proline 617, proline 626, proline 644, proline 653, and proline 661. An allysine mark is found at lysine 668 and lysine 671. Proline 702 carries the post-translational modification 4-hydroxyproline. Allysine is present on residues lysine 719, lysine 723, lysine 783, and lysine 786. The residue at position 832 (proline 832) is a 4-hydroxyproline. Cysteine 850 and cysteine 855 are oxidised to a cystine.

The protein belongs to the elastin family. As to quaternary structure, the polymeric elastin chains are cross-linked together into an extensible 3D network. Forms a ternary complex with BGN and MFAP2. Interacts with MFAP2 via divalent cations (calcium &gt; magnesium &gt; manganese) in a dose-dependent and saturating manner. Interacts with FBLN5 and FBN1. Forms a ternary complex with FBN1 and FBLN2 or FBLN5. Interacts with MFAP4 in a Ca (2+)-dependent manner; this interaction promotes ELN self-assembly. Interacts with EFEMP2 with moderate affinity. Elastin is formed through the cross-linking of its soluble precursor tropoelastin. Cross-linking is initiated through the action of lysyl oxidase on exposed lysines to form allysine. Subsequent spontaneous condensation reactions with other allysine or unmodified lysine residues result in various bi-, tri-, and tetrafunctional cross-links. The most abundant cross-links in mature elastin fibers are lysinonorleucine, allysine aldol, desmosine, and isodesmosine. In terms of processing, hydroxylation on proline residues within the sequence motif, GXPG, is most likely to be 4-hydroxy as this fits the requirement for 4-hydroxylation in vertebrates.

Its subcellular location is the secreted. It is found in the extracellular space. The protein localises to the extracellular matrix. In terms of biological role, major structural protein of tissues such as aorta and nuchal ligament, which must expand rapidly and recover completely. Molecular determinant of the late arterial morphogenesis, stabilizing arterial structure by regulating proliferation and organization of vascular smooth muscle. The sequence is that of Elastin (Eln) from Mus musculus (Mouse).